The sequence spans 628 residues: DNA primase (628 aa).

Residues 40 to 64 form a CHC2-type zinc finger; the sequence is CPFHEERSPSFSVAEDKQIFHCFGC. Positions 269–351 constitute a Toprim domain; it reads NTVLLFEGFM…DLSIVSIPEK (83 aa). Mg(2+) contacts are provided by Glu275, Asp319, and Asp321.

It belongs to the DnaG primase family. In terms of assembly, monomer. Interacts with DnaB. It depends on Zn(2+) as a cofactor. The cofactor is Mg(2+).

The enzyme catalyses ssDNA + n NTP = ssDNA/pppN(pN)n-1 hybrid + (n-1) diphosphate.. Its function is as follows. RNA polymerase that catalyzes the synthesis of short RNA molecules used as primers for DNA polymerase during DNA replication. This is DNA primase from Enterococcus faecalis (strain ATCC 700802 / V583).